The primary structure comprises 128 residues: Modulator protein MzrA (128 aa).

Topologically, residues 1 to 13 are cytoplasmic; that stretch reads MLALLRPYLSTRV. Residues 14-34 form a helical membrane-spanning segment; it reads LCVLVVCFSALMLVAFIPTLF. Topologically, residues 35–128 are periplasmic; it reads RNDTALQIRA…RLSLRKQSVG (94 aa).

This sequence belongs to the MzrA family. Interacts with EnvZ.

It localises to the cell inner membrane. In terms of biological role, modulates the activity of the EnvZ/OmpR two-component regulatory system, probably by directly modulating EnvZ enzymatic activity and increasing stability of phosphorylated OmpR. The chain is Modulator protein MzrA from Erwinia billingiae (strain Eb661).